A 163-amino-acid polypeptide reads, in one-letter code: ATP synthase subunit b 1 (163 aa).

A helical membrane pass occupies residues Ala7–Val27.

This sequence belongs to the ATPase B chain family. In terms of assembly, F-type ATPases have 2 components, F(1) - the catalytic core - and F(0) - the membrane proton channel. F(1) has five subunits: alpha(3), beta(3), gamma(1), delta(1), epsilon(1). F(0) has three main subunits: a(1), b(2) and c(10-14). The alpha and beta chains form an alternating ring which encloses part of the gamma chain. F(1) is attached to F(0) by a central stalk formed by the gamma and epsilon chains, while a peripheral stalk is formed by the delta and b chains.

The protein resides in the cell inner membrane. In terms of biological role, f(1)F(0) ATP synthase produces ATP from ADP in the presence of a proton or sodium gradient. F-type ATPases consist of two structural domains, F(1) containing the extramembraneous catalytic core and F(0) containing the membrane proton channel, linked together by a central stalk and a peripheral stalk. During catalysis, ATP synthesis in the catalytic domain of F(1) is coupled via a rotary mechanism of the central stalk subunits to proton translocation. Functionally, component of the F(0) channel, it forms part of the peripheral stalk, linking F(1) to F(0). The protein is ATP synthase subunit b 1 of Rhodopseudomonas palustris (strain BisB5).